Reading from the N-terminus, the 421-residue chain is MRVVFSSMASKSHLFGLVPLAWAFRAAGHEVRVVASPALTEDITAAGLTAVPVGTDVDLVDFMTHAGHDIIDYVRSLDFSERDPATLTWEHLLGMQTVLTPTFYALMSPDTLIEGMVSFCRKWRPDLVIWEPLTFAAPIAAAVTGTPHARLLWGPDITTRARQNFLGLLPDQPEEHREDPLAEWLTWTLEKYGGPAFDEEVVVGQWTIDPAPAAIRLDTGLKTVGMRYVDYNGPSVVPEWLHDEPERRRVCLTLGISSRENSIGQVSIEELLGAVGDVDAEIIATFDAQQLEGVANIPDNVRTVGFVPMHALLPTCAATVHHGGPGSWHTAAIHGVPQVILPDGWDTGVRAQRTQEFGAGIALPVPELTPDQLRESVKRVLDDPAHRAGAARMRDDMLAEPSPAEVVGICEELAAGRREPR.

Positions 1-23 (MRVVFSSMASKSHLFGLVPLAWA) are cleaved as a signal peptide.

The protein belongs to the glycosyltransferase 28 family. In terms of assembly, heterotetramer composed of EryCII and EryCIII.

It carries out the reaction 3-O-alpha-L-mycarosylerythronolide B + dTDP-alpha-D-desosamine = erythromycin D + dTDP + H(+). The protein operates within antibiotic biosynthesis; erythromycin biosynthesis. Functionally, catalyzes the conversion of alpha-L-mycarosylerythronolide B into erythromycin D in the erythromycin biosynthesis pathway. In Saccharopolyspora erythraea (strain ATCC 11635 / DSM 40517 / JCM 4748 / NBRC 13426 / NCIMB 8594 / NRRL 2338), this protein is 3-alpha-mycarosylerythronolide B desosaminyl transferase (eryCIII).